Consider the following 1207-residue polypeptide: DNA-directed RNA polymerase subunit beta' (1207 aa).

The Zn(2+) site is built by Cys-60, Cys-62, Cys-75, and Cys-78. Asp-450, Asp-452, and Asp-454 together coordinate Mg(2+). The Zn(2+) site is built by Cys-819, Cys-893, Cys-900, and Cys-903.

The protein belongs to the RNA polymerase beta' chain family. As to quaternary structure, the RNAP catalytic core consists of 2 alpha, 1 beta, 1 beta' and 1 omega subunit. When a sigma factor is associated with the core the holoenzyme is formed, which can initiate transcription. The cofactor is Mg(2+). Zn(2+) serves as cofactor.

The catalysed reaction is RNA(n) + a ribonucleoside 5'-triphosphate = RNA(n+1) + diphosphate. DNA-dependent RNA polymerase catalyzes the transcription of DNA into RNA using the four ribonucleoside triphosphates as substrates. The sequence is that of DNA-directed RNA polymerase subunit beta' from Streptococcus pyogenes serotype M12 (strain MGAS2096).